Here is a 73-residue protein sequence, read N- to C-terminus: DNA gyrase inhibitor YacG (73 aa).

Zn(2+) is bound by residues Cys14, Cys17, Cys30, and Cys34. Positions 54–73 (AEQADDTAGPGAAEDDTDSH) are disordered.

It belongs to the DNA gyrase inhibitor YacG family. In terms of assembly, interacts with GyrB. The cofactor is Zn(2+).

Functionally, inhibits all the catalytic activities of DNA gyrase by preventing its interaction with DNA. Acts by binding directly to the C-terminal domain of GyrB, which probably disrupts DNA binding by the gyrase. This is DNA gyrase inhibitor YacG from Hyphomonas neptunium (strain ATCC 15444).